Consider the following 1390-residue polypeptide: MEVLMAERANLVFHNKVIDGTAMKRLISRLIDHFGMAYTSHILDQVKTLGFQQATATSISLGIDDLLTIPSKRWLVQDAEEQSFILEKHHHSGNVHAVEKLRQSIEIWYATSEFLRQEMNPNFRMTDPFNPVHIMSFSGARGNASQVHQLVGMRGLMSDPQGQMIDLPIQSNLREGLSLTEYIISCYGARKGVVDTAVRTSDAGYLTRRLVEVVQHIVVRRKDCGTARGISVSLGNGMMSENIFIQTLIGRVLADDIYMGTRCIATRNQDIGSGLVNQFITFRAQPIYIRTPFTCRSTSWICQLCYGRSPTHGDLVELGEAVGIIAGQSIGEPGTQLTLRTFHTGGVFTGGIAEHVRAPSNGKIKFNEDLVHPTRTRHGHPAFVCSIDLYVTIESEDILHNVNIPPKSFLLVQNDQYVESEQVIAEIRAGTSTLNFKEKVRKHIYSDSEGEMHWNTDVYHAPEFTYGNVHLLPKTSHLWILLGEPRRSDLISLSIHKDQDQMNARSFSVKKRSISNLSVTNDQVRHKFFSSDFFGKKEEEHPDYSELNRIVRCNLRYPTIPYADYDLLAKRRRKRFIIPLQSIQERENELMPPSGISIEIPINGIFRINSILAFFDDPRYRRKSSGITKYGTIEVDPIAKKEDLIEYRGVKEFKPKYQIKVDRFFFIPEEMHILPGSSSIMVRNNSIIGIDTQIALTTRSRVGGLVRVEIKKKRIELKIFSGDIHFPGETDKISRHSGVLIPPGTGKTNSKESKKGKNWIYVQRITPTNKKYFVLVRPVVTYEITDGINLVRLFPPDLLQEMDNVQLRVVNYILYGNGKPIREIYNTSIQLVRTCLVLNCTQDKKSSYIEETRTSFVEIGINGLSRDFIKIDLVKSPISYTAKRNDPSRSGLIYENGSDCTNINPFSSRFFYYSNARIKESLNQNQGTIHTLFNRNKEYQSLIILSSSNCFRMGPFNNVKYHNVIKESIKKDPPIPIRNLLGPLGTALKTANFYPFSHLITYNQILVINYLQLDNLKQTFQVIKYFLMDEIGKIYNYDLCSNIILNPFNLNWYFLQHNYCEGMSTIMSLGQFICENVCIAKNGPHLKSGQVLIVKMDSVVIRSAKPYLATPGATVHGHYGEILYEGDTLVTFIYEKSRSGDITQGLPKVEQVLEVRSIDSISMNLEKRVEGWHECITRTLGIPWGFLIGAELTIVQSRIALVNKIQKVYRSQGVQIHNRHIEIIVRQITSKVLVSEDGMSNVFLPGELIGLLRAERMGRALEEAICYRAVLLGITKASLNTQSFISEASFQETARVLAKAALRGRIDWLKGLKENVVLGGMIPVGTGFEGLVHSSRQHTNLSLETKNNNIFEGEMRDILFHHRKFFDSCFSKNFHDTSEQSFIGIGFNDS.

Residues cysteine 224, cysteine 295, cysteine 302, and cysteine 305 each contribute to the Zn(2+) site.

It belongs to the RNA polymerase beta' chain family. RpoC2 subfamily. In plastids the minimal PEP RNA polymerase catalytic core is composed of four subunits: alpha, beta, beta', and beta''. When a (nuclear-encoded) sigma factor is associated with the core the holoenzyme is formed, which can initiate transcription. Zn(2+) is required as a cofactor.

Its subcellular location is the plastid. It localises to the chloroplast. It catalyses the reaction RNA(n) + a ribonucleoside 5'-triphosphate = RNA(n+1) + diphosphate. Its function is as follows. DNA-dependent RNA polymerase catalyzes the transcription of DNA into RNA using the four ribonucleoside triphosphates as substrates. The polypeptide is DNA-directed RNA polymerase subunit beta'' (Daucus carota (Wild carrot)).